A 385-amino-acid chain; its full sequence is NADH-quinone oxidoreductase subunit H (385 aa).

Transmembrane regions (helical) follow at residues Gly-14–Leu-34, Phe-80–Ile-100, Ile-130–Met-150, Ile-172–Phe-192, Leu-219–Phe-239, Met-280–Val-300, Leu-325–Val-345, and Met-365–Leu-385.

It belongs to the complex I subunit 1 family. NDH-1 is composed of 14 different subunits. Subunits NuoA, H, J, K, L, M, N constitute the membrane sector of the complex.

Its subcellular location is the cell inner membrane. The enzyme catalyses a quinone + NADH + 5 H(+)(in) = a quinol + NAD(+) + 4 H(+)(out). NDH-1 shuttles electrons from NADH, via FMN and iron-sulfur (Fe-S) centers, to quinones in the respiratory chain. The immediate electron acceptor for the enzyme in this species is believed to be ubiquinone. Couples the redox reaction to proton translocation (for every two electrons transferred, four hydrogen ions are translocated across the cytoplasmic membrane), and thus conserves the redox energy in a proton gradient. This subunit may bind ubiquinone. The chain is NADH-quinone oxidoreductase subunit H from Bdellovibrio bacteriovorus (strain ATCC 15356 / DSM 50701 / NCIMB 9529 / HD100).